The chain runs to 291 residues: Ribosomal RNA small subunit methyltransferase A (291 aa).

6 residues coordinate S-adenosyl-L-methionine: asparagine 29, leucine 31, glycine 56, glutamate 77, aspartate 102, and asparagine 127.

Belongs to the class I-like SAM-binding methyltransferase superfamily. rRNA adenine N(6)-methyltransferase family. RsmA subfamily.

It is found in the cytoplasm. It catalyses the reaction adenosine(1518)/adenosine(1519) in 16S rRNA + 4 S-adenosyl-L-methionine = N(6)-dimethyladenosine(1518)/N(6)-dimethyladenosine(1519) in 16S rRNA + 4 S-adenosyl-L-homocysteine + 4 H(+). Its function is as follows. Specifically dimethylates two adjacent adenosines (A1518 and A1519) in the loop of a conserved hairpin near the 3'-end of 16S rRNA in the 30S particle. May play a critical role in biogenesis of 30S subunits. This Geobacillus sp. (strain WCH70) protein is Ribosomal RNA small subunit methyltransferase A.